We begin with the raw amino-acid sequence, 380 residues long: Cytochrome b (380 aa).

Transmembrane regions (helical) follow at residues 33–53, 77–98, 113–133, and 178–198; these read FGSL…FLAM, WLIR…YLHI, WNVG…GYVL, and FFAF…LHFL. Heme b-binding residues include His-83 and His-97. His-182 and His-196 together coordinate heme b. His-201 provides a ligand contact to a ubiquinone. Helical transmembrane passes span 226–246, 288–308, 320–340, and 347–367; these read YKDL…SLFS, LGGV…PILH, LTQI…WIGG, and FIIV…VIMP.

The protein belongs to the cytochrome b family. In terms of assembly, the cytochrome bc1 complex contains 3 respiratory subunits (MT-CYB, CYC1 and UQCRFS1), 2 core proteins (UQCRC1 and UQCRC2) and probably 6 low-molecular weight proteins. Heme b is required as a cofactor.

The protein localises to the mitochondrion inner membrane. Functionally, component of the ubiquinol-cytochrome c reductase complex (complex III or cytochrome b-c1 complex) that is part of the mitochondrial respiratory chain. The b-c1 complex mediates electron transfer from ubiquinol to cytochrome c. Contributes to the generation of a proton gradient across the mitochondrial membrane that is then used for ATP synthesis. The polypeptide is Cytochrome b (mt-cyb) (Zeus faber (John Dory)).